The sequence spans 286 residues: Pyridoxine 4-dehydrogenase (286 aa).

The active-site Proton donor is the Y59. NADP(+) is bound at residue 210-218; it reads FPLGGFTPL.

It belongs to the aldo/keto reductase family. Aldo/keto reductase 2 subfamily.

It carries out the reaction pyridoxine + NADP(+) = pyridoxal + NADPH + H(+). It catalyses the reaction pyridoxine + NAD(+) = pyridoxal + NADH + H(+). Functionally, catalyzes the NAD(P)H-dependent reduction of pyridoxal to pyridoxine in vitro. Is not able to reduce 4-pyridoxate, and to oxidize pyridoxine or pyridoxamine. Has Kemp eliminase activity towards the non-physiological substrate 5-nitrobenzisoxazole, producing 4-nitro-2-cyanophenol; this activity is not considered to be physiologically relevant. The protein is Pyridoxine 4-dehydrogenase of Escherichia coli (strain K12).